The primary structure comprises 714 residues: Nucleolin (714 aa).

The tract at residues 1 to 303 is disordered; sequence MVKLAKAGKT…AKKQKVEGSE (303 aa). N6-acetyllysine occurs at positions 9, 15, and 16. Residues 24-42 show a composition bias toward acidic residues; that stretch reads VEEDSEDEEMSEEEDDSSG. Residues Ser28, Ser34, Ser40, and Ser41 each carry the phosphoserine modification. Low complexity predominate over residues 55 to 106; the sequence is ATATPAKKVVVSQTKKVAVPTPAKKAAVTPGKKAAATPAKKAVTPAKAVATP. Copy 1 of the repeat occupies 57–64; it reads ATPAKKVV. Residues 57-134 form an 8 X 8 AA tandem repeats of X-T-P-X-K-K-X-X region; that stretch reads ATPAKKVVVS…GAVTPAKGAK (78 aa). A Phosphoserine modification is found at Ser66. Thr68, Thr75, Thr83, and Thr91 each carry phosphothreonine. Repeat copies occupy residues 74–81, 82–89, and 90–97. Lys95 is subject to N6-acetyllysine. At Thr98 the chain carries Phosphothreonine. A 5; truncated repeat occupies 98-103; the sequence is TPAKAV. N6-acetyllysine is present on Lys101. The stretch at 104–111 is repeat 6; the sequence is ATPGKKGA. Position 105 is a phosphothreonine (Thr105). Residue Lys108 is modified to N6-acetyllysine. Thr112 carries the phosphothreonine modification. At Lys115 the chain carries N6-acetyllysine. Tandem repeats lie at residues 119–126 and 127–134. At Thr120 the chain carries Phosphothreonine. Lys123 is modified (N6-acetyllysine). Residues Ser144 and Ser157 each carry the phosphoserine modification. Acidic residues predominate over residues 144 to 170; that stretch reads SDEDEDDDDDEDDSDEDEEDEEEDEFE. Positions 171 to 187 are enriched in low complexity; the sequence is PPVVKGKQGKVAAAAPA. Residue Ser188 is modified to Phosphoserine. Positions 188–216 are enriched in acidic residues; the sequence is SEDEDEEEDEEEEEEDEEEEDDSEEEEAM. The residue at position 219 (Thr219) is a Phosphothreonine. The span at 240–272 shows a compositional bias: acidic residues; it reads EEDDDDEEEDEDEEEDEEEEEDEEEEEEEEEEE. Basic and acidic residues predominate over residues 285-301; it reads MTKQKEVPEAKKQKVEG. Lys298 participates in a covalent cross-link: Glycyl lysine isopeptide (Lys-Gly) (interchain with G-Cter in SUMO1); alternate. Residue Lys298 forms a Glycyl lysine isopeptide (Lys-Gly) (interchain with G-Cter in SUMO2); alternate linkage. A Phosphoserine modification is found at Ser302. 2 RRM domains span residues 308–384 and 394–467; these read FNLF…KPKG and RTLL…YTGE. Residue Lys319 is modified to N6-acetyllysine. A Glycyl lysine isopeptide (Lys-Gly) (interchain with G-Cter in SUMO1); alternate cross-link involves residue Lys325. Lys325 participates in a covalent cross-link: Glycyl lysine isopeptide (Lys-Gly) (interchain with G-Cter in SUMO2); alternate. The residue at position 349 (Lys349) is an N6-acetyllysine. The residue at position 357 (Ser357) is a Phosphoserine. Thr368 is subject to Phosphothreonine. Lys371 is covalently cross-linked (Glycyl lysine isopeptide (Lys-Gly) (interchain with G-Cter in SUMO2)). Lys378 participates in a covalent cross-link: Glycyl lysine isopeptide (Lys-Gly) (interchain with G-Cter in SUMO2); alternate. Lys378 is subject to N6-acetyllysine; alternate. Lys399 is subject to N6-acetyllysine. Ser402 carries the phosphoserine modification. Thr406 carries the post-translational modification Phosphothreonine. 2 positions are modified to N6-acetyllysine: Lys428 and Lys445. A phosphoserine mark is found at Ser459 and Ser461. N6-acetyllysine is present on residues Lys468 and Lys477. An RRM 3 domain is found at 486–560; that stretch reads KTLVLSNLSY…RTIRLELQGP (75 aa). Lys513 participates in a covalent cross-link: Glycyl lysine isopeptide (Lys-Gly) (interchain with G-Cter in SUMO2); alternate. The residue at position 513 (Lys513) is an N6-acetyllysine; alternate. The residue at position 521 (Lys521) is an N6-acetyllysine. Ser563 carries the phosphoserine modification. Residue Lys572 is modified to N6-acetyllysine. Residues 572–647 enclose the RRM 4 domain; that stretch reads KTLFVKGLSE…NKVTLDWAKP (76 aa). A Glycyl lysine isopeptide (Lys-Gly) (interchain with G-Cter in SUMO2); alternate cross-link involves residue Lys577. At Lys577 the chain carries N6-acetyllysine; alternate. At Ser580 the chain carries Phosphoserine. Lys589 is covalently cross-linked (Glycyl lysine isopeptide (Lys-Gly) (interchain with G-Cter in SUMO1); alternate). Residue Lys589 forms a Glycyl lysine isopeptide (Lys-Gly) (interchain with G-Cter in SUMO2); alternate linkage. Phosphoserine occurs at positions 591 and 619. Residue Lys624 forms a Glycyl lysine isopeptide (Lys-Gly) (interchain with G-Cter in SUMO2) linkage. The interval 642 to 714 is disordered; that stretch reads LDWAKPKGEG…KPQGKKTKFE (73 aa). Lys646 carries the post-translational modification N6-acetyllysine. Residues 650–703 are compositionally biased toward gly residues; the sequence is EGGFGGRGGGRGGFGGRGGGRGGGRGGFGGRGRGGFGGRGGFRGGRGGGGGGGD. Residues Arg656, Arg660, Arg666, Arg670, Arg674, Arg680, Arg682, Arg688, and Arg692 each carry the asymmetric dimethylarginine modification. Arg695 carries the post-translational modification Asymmetric dimethylarginine; alternate. The residue at position 695 (Arg695) is an Omega-N-methylarginine; alternate.

As to quaternary structure, identified in a IGF2BP1-dependent mRNP granule complex containing untranslated mRNAs. Component of the SWAP complex that consists of NPM1, NCL/nucleolin, PARP1 and SWAP70. Component of a complex which is at least composed of HTATSF1/Tat-SF1, the P-TEFb complex components CDK9 and CCNT1, RNA polymerase II, SUPT5H, and NCL/nucleolin. Interacts with AICDA. Interacts with APTX. Interacts with C1QBP. Interacts with ERBB4. Interacts (via C-terminus) with FMR1 isoform 6 (via N-terminus). Interacts with GZF1; this interaction is important for nucleolar localization of GZF1. Interacts with NSUN2. Interacts with NVL. Interacts (via N-terminus domain) with SETX. Interacts (via RRM1 and C-terminal RRM4/Arg/Gly-rich domains) with TERT; the interaction is important for nucleolar localization of TERT. Interacts with WDR46. Interacts with ZFP36. Interacts with LRRC34. Interacts with RRP1B. Interacts with HNRNPU; this interaction occurs during mitosis. Interacts with RIOK1; RIOK1 recruits NCL to PRMT5 for symmetrically methylation. Interacts with ZBTB7B. Interacts with MDK; this interaction promotes NCL clustering and lateral movements of this complex into lipid rafts leading to MDK internalization. Interacts with HDGF. Interacts with ALKBH2. Interacts with IGFBP5; this interaction is necessary for IGFBP5 localization to the nucleus. Interacts with DDX24 (when ubiquitinated); this interaction may be important during ribosome biogenesis. In terms of processing, some glutamate residues are glycylated by TTLL8. This modification occurs exclusively on glutamate residues and results in a glycine chain on the gamma-carboxyl group. Symmetrically methylated by PRMT5.

The protein localises to the nucleus. The protein resides in the nucleolus. Its subcellular location is the cytoplasm. In terms of biological role, nucleolin is the major nucleolar protein of growing eukaryotic cells. It is found associated with intranucleolar chromatin and pre-ribosomal particles. It induces chromatin decondensation by binding to histone H1. It is thought to play a role in pre-rRNA transcription and ribosome assembly. May play a role in the process of transcriptional elongation. Binds RNA oligonucleotides with 5'-UUAGGG-3' repeats more tightly than the telomeric single-stranded DNA 5'-TTAGGG-3' repeats. The sequence is that of Nucleolin (NCL) from Mesocricetus auratus (Golden hamster).